Reading from the N-terminus, the 160-residue chain is Protein shisa-like-2B (160 aa).

Residues 65–85 (IGALIGLGIAALVLLAFVISV) traverse the membrane as a helical segment.

This sequence belongs to the shisa family.

The protein resides in the membrane. This chain is Protein shisa-like-2B, found in Homo sapiens (Human).